The chain runs to 968 residues: RNA polymerase-associated protein RapA (968 aa).

One can recognise a Helicase ATP-binding domain in the interval 163-332 (EVGRRYAPRV…FARLRLLDPD (170 aa)). Position 176 to 183 (176 to 183 (DEVGLGKT)) interacts with ATP. The DEAH box signature appears at 278-281 (DEAH). In terms of domain architecture, Helicase C-terminal spans 491 to 643 (RVDWLIAFLK…ELTCPSGHVL (153 aa)).

It belongs to the SNF2/RAD54 helicase family. RapA subfamily. Interacts with the RNAP. Has a higher affinity for the core RNAP than for the holoenzyme. Its ATPase activity is stimulated by binding to RNAP.

Its function is as follows. Transcription regulator that activates transcription by stimulating RNA polymerase (RNAP) recycling in case of stress conditions such as supercoiled DNA or high salt concentrations. Probably acts by releasing the RNAP, when it is trapped or immobilized on tightly supercoiled DNA. Does not activate transcription on linear DNA. Probably not involved in DNA repair. The sequence is that of RNA polymerase-associated protein RapA from Shewanella putrefaciens (strain CN-32 / ATCC BAA-453).